A 328-amino-acid polypeptide reads, in one-letter code: MSLKKIIDVKSVNTLLKKGIINKEGVRIIDCSFAVAPRPDWKEFEQEGYGDFKNLMAEPSPSRNLYLAGHIPEAVHVDLDIATYPSRYQRFQQYRADLFEEYAQMVGLNNKEHFIFYGKGAFGGMLFASKVAWIFKSYGHENISLVDGGFDSWKRNGFEVSTELVKLPAGNFKAEDNFKKYVITFQELEAKKDGEDKQFIEKTSEINFLDSRIRGQFDGTQETGLDPHLVNGTRIAGFKNLPSAELLVKGGNLKSEEEIKSWLTQNGYVENQPTITSCNAGIQAALLAYVIDAVKPSQNPPRVYNGSLKEMELRAPKKISEGPQHLPH.

Rhodanese domains lie at 22-162 (NKEG…EVST) and 202-320 (KTSE…KKIS). The Cysteine persulfide intermediate role is filled by cysteine 278.

The enzyme catalyses thiosulfate + hydrogen cyanide = thiocyanate + sulfite + 2 H(+). This is Putative thiosulfate sulfurtransferase mpst-1 (mpst-1) from Caenorhabditis elegans.